Consider the following 146-residue polypeptide: Acidic phospholipase A2 CM-II (146 aa).

Residues 1–21 (MNPAHLLILAAVCVSPLGAFS) form the signal peptide. The propeptide occupies 22–27 (NRPMPL). 7 disulfides stabilise this stretch: Cys-38–Cys-98, Cys-53–Cys-145, Cys-55–Cys-71, Cys-70–Cys-126, Cys-77–Cys-119, Cys-87–Cys-112, and Cys-105–Cys-117. Ca(2+) is bound by residues Tyr-54, Gly-56, and Gly-58. Residue His-74 is part of the active site. Asp-75 contributes to the Ca(2+) binding site. Asp-120 is an active-site residue.

Belongs to the phospholipase A2 family. Group I subfamily. D49 sub-subfamily. It depends on Ca(2+) as a cofactor. In terms of tissue distribution, expressed by the venom gland.

Its subcellular location is the secreted. The catalysed reaction is a 1,2-diacyl-sn-glycero-3-phosphocholine + H2O = a 1-acyl-sn-glycero-3-phosphocholine + a fatty acid + H(+). PLA2 catalyzes the calcium-dependent hydrolysis of the 2-acyl groups in 3-sn-phosphoglycerides. Is able to suppress the acetylcholine (ACh)-evoked current mediated by alpha-7 (CHRNA7)-similar nAChRs in L.stagnalis neurons (IC(50)=37 nM) and to compete with alpha-bungarotoxin for binding to muscle- and alpha-7 neuronal nAChR types, as well as to AChBPs. In inhibition of alpha-bungarotoxin binding, this toxin is similarly active against T.californica nAChR (IC(50)=1.2 uM), human alpha-7 nAChR (IC(50)=3.2 uM), and L.stagnalis AChBP (IC(50)=1.0 uM), whereas it is not active against A.californica AChBP (IC(50)&gt;100 uM). This is Acidic phospholipase A2 CM-II from Naja kaouthia (Monocled cobra).